Consider the following 330-residue polypeptide: ADP-L-glycero-D-manno-heptose-6-epimerase (330 aa).

NADP(+) contacts are provided by residues 11 to 12 (FI), 32 to 33 (DN), Lys-39, Lys-54, 75 to 79 (EGACS), and Asn-92. Tyr-139 (proton acceptor) is an active-site residue. Lys-143 provides a ligand contact to NADP(+). Asn-168 is a substrate binding site. Val-169 and Lys-177 together coordinate NADP(+). Lys-177 (proton acceptor) is an active-site residue. Residues Arg-179, His-186, 200-203 (FGEY), Arg-213, and Tyr-292 each bind substrate.

The protein belongs to the NAD(P)-dependent epimerase/dehydratase family. HldD subfamily. In terms of assembly, homopentamer. The cofactor is NADP(+).

The enzyme catalyses ADP-D-glycero-beta-D-manno-heptose = ADP-L-glycero-beta-D-manno-heptose. The protein operates within nucleotide-sugar biosynthesis; ADP-L-glycero-beta-D-manno-heptose biosynthesis; ADP-L-glycero-beta-D-manno-heptose from D-glycero-beta-D-manno-heptose 7-phosphate: step 4/4. Catalyzes the interconversion between ADP-D-glycero-beta-D-manno-heptose and ADP-L-glycero-beta-D-manno-heptose via an epimerization at carbon 6 of the heptose. The sequence is that of ADP-L-glycero-D-manno-heptose-6-epimerase from Burkholderia multivorans (strain ATCC 17616 / 249).